We begin with the raw amino-acid sequence, 141 residues long: Large ribosomal subunit protein uL16 (141 aa).

It belongs to the universal ribosomal protein uL16 family. Part of the 50S ribosomal subunit.

In terms of biological role, binds 23S rRNA and is also seen to make contacts with the A and possibly P site tRNAs. This chain is Large ribosomal subunit protein uL16, found in Aliarcobacter butzleri (strain RM4018) (Arcobacter butzleri).